The following is a 227-amino-acid chain: Cytochrome c oxidase subunit 2 (227 aa).

The Mitochondrial intermembrane portion of the chain corresponds to M1–S14. The chain crosses the membrane as a helical span at residues P15–M45. Over L46–Q59 the chain is Mitochondrial matrix. The helical transmembrane segment at E60 to M87 threads the bilayer. Residues D88 to L227 are Mitochondrial intermembrane-facing. The Cu cation site is built by H161, C196, E198, C200, H204, and M207. Mg(2+) is bound at residue E198.

It belongs to the cytochrome c oxidase subunit 2 family. Component of the cytochrome c oxidase (complex IV, CIV), a multisubunit enzyme composed of 14 subunits. The complex is composed of a catalytic core of 3 subunits MT-CO1, MT-CO2 and MT-CO3, encoded in the mitochondrial DNA, and 11 supernumerary subunits COX4I, COX5A, COX5B, COX6A, COX6B, COX6C, COX7A, COX7B, COX7C, COX8 and NDUFA4, which are encoded in the nuclear genome. The complex exists as a monomer or a dimer and forms supercomplexes (SCs) in the inner mitochondrial membrane with NADH-ubiquinone oxidoreductase (complex I, CI) and ubiquinol-cytochrome c oxidoreductase (cytochrome b-c1 complex, complex III, CIII), resulting in different assemblies (supercomplex SCI(1)III(2)IV(1) and megacomplex MCI(2)III(2)IV(2)). Found in a complex with TMEM177, COA6, COX18, COX20, SCO1 and SCO2. Interacts with TMEM177 in a COX20-dependent manner. Interacts with COX20. Interacts with COX16. Cu cation serves as cofactor.

The protein localises to the mitochondrion inner membrane. It catalyses the reaction 4 Fe(II)-[cytochrome c] + O2 + 8 H(+)(in) = 4 Fe(III)-[cytochrome c] + 2 H2O + 4 H(+)(out). Component of the cytochrome c oxidase, the last enzyme in the mitochondrial electron transport chain which drives oxidative phosphorylation. The respiratory chain contains 3 multisubunit complexes succinate dehydrogenase (complex II, CII), ubiquinol-cytochrome c oxidoreductase (cytochrome b-c1 complex, complex III, CIII) and cytochrome c oxidase (complex IV, CIV), that cooperate to transfer electrons derived from NADH and succinate to molecular oxygen, creating an electrochemical gradient over the inner membrane that drives transmembrane transport and the ATP synthase. Cytochrome c oxidase is the component of the respiratory chain that catalyzes the reduction of oxygen to water. Electrons originating from reduced cytochrome c in the intermembrane space (IMS) are transferred via the dinuclear copper A center (CU(A)) of subunit 2 and heme A of subunit 1 to the active site in subunit 1, a binuclear center (BNC) formed by heme A3 and copper B (CU(B)). The BNC reduces molecular oxygen to 2 water molecules using 4 electrons from cytochrome c in the IMS and 4 protons from the mitochondrial matrix. The polypeptide is Cytochrome c oxidase subunit 2 (MT-CO2) (Balaenoptera physalus (Fin whale)).